Consider the following 163-residue polypeptide: Peptide deformylase (163 aa).

2 residues coordinate Fe cation: cysteine 91 and histidine 133. The active site involves glutamate 134. Residue histidine 137 participates in Fe cation binding.

This sequence belongs to the polypeptide deformylase family. Requires Fe(2+) as cofactor.

The catalysed reaction is N-terminal N-formyl-L-methionyl-[peptide] + H2O = N-terminal L-methionyl-[peptide] + formate. Functionally, removes the formyl group from the N-terminal Met of newly synthesized proteins. Requires at least a dipeptide for an efficient rate of reaction. N-terminal L-methionine is a prerequisite for activity but the enzyme has broad specificity at other positions. The protein is Peptide deformylase of Lachnoclostridium phytofermentans (strain ATCC 700394 / DSM 18823 / ISDg) (Clostridium phytofermentans).